A 255-amino-acid chain; its full sequence is H-2 class II histocompatibility antigen, E-K alpha chain (255 aa).

The N-terminal stretch at 1–25 (MATIGALVLRFFFIAVLMSSQKSWA) is a signal peptide. The tract at residues 26–109 (IKEEHTIIQA…ERSNNTPDAN (84 aa)) is alpha-1. Residues 26–216 (IKEEHTIIQA…EKTLLPETKE (191 aa)) are Extracellular-facing. Positions 110–203 (VAPEVTVLSR…GLEEPLRKHW (94 aa)) are alpha-2. Residues 112 to 204 (PEVTVLSRSP…LEEPLRKHWE (93 aa)) enclose the Ig-like C1-type domain. Residues Cys-132 and Cys-188 are joined by a disulfide bond. N-linked (GlcNAc...) asparagine glycosylation is present at Asn-143. Residues 204–216 (EFEEKTLLPETKE) form a connecting peptide region. A helical membrane pass occupies residues 217-242 (NVVCALGLFVGLVGIVVGIILIMKGI). Residues 243–255 (KKRNVVERRQGAL) are Cytoplasmic-facing.

This sequence belongs to the MHC class II family.

The protein resides in the membrane. In Mus musculus (Mouse), this protein is H-2 class II histocompatibility antigen, E-K alpha chain.